A 447-amino-acid chain; its full sequence is EIVHIQGGQCGNQIGAKFWEVVCAEHGIDPTGRYGGDTDLQLERINVYYNEASCGRYVPRAVLMDLEPGTMDSVRSGPYGQIFRPDNFVFGQSGAGNNWAKGHYTEGAELIDSVLDVVRKEAENCDCLQGFQVCHSLGGGTGSGMGTLLISKIREEYPDRMMLTFSVFPSPKVSDTVVEPYNATLSVHQLVENADECMVLDNEALYDICFRTLKLTTPSFGDLNHLISATMSGVTCCLRFPGQLNSDLRKLAVNLIPFPRLHFFMLGFAPLTSRGSQQYRALSVPEITQQMWDSKNMMCAADPRHGRYLTASAIFRGKMSTKEVDEQMMNVQNKNSSYFVEWIPNNVKSTVCDIPPTGLKMASTFIGNSTSIQEMFRRVSEQFTAMFRRKAFLHWYTGEGMDEMEFTEAESNMNDLVSEYQQYQDATAEEDEYEEEEEDYHQEHDEM.

The GTP site is built by Gln-9, Glu-67, Ser-136, Gly-140, Thr-141, Gly-142, Asn-202, and Asn-224. Residue Glu-67 participates in Mg(2+) binding. A compositionally biased stretch (polar residues) spans 411–425 (SNMNDLVSEYQQYQD). The disordered stretch occupies residues 411–447 (SNMNDLVSEYQQYQDATAEEDEYEEEEEDYHQEHDEM). Residues 427 to 440 (TAEEDEYEEEEEDY) are compositionally biased toward acidic residues.

Belongs to the tubulin family. As to quaternary structure, dimer of alpha and beta chains. A typical microtubule is a hollow water-filled tube with an outer diameter of 25 nm and an inner diameter of 15 nM. Alpha-beta heterodimers associate head-to-tail to form protofilaments running lengthwise along the microtubule wall with the beta-tubulin subunit facing the microtubule plus end conferring a structural polarity. Microtubules usually have 13 protofilaments but different protofilament numbers can be found in some organisms and specialized cells. Mg(2+) is required as a cofactor.

It is found in the cytoplasm. Its subcellular location is the cytoskeleton. In terms of biological role, tubulin is the major constituent of microtubules, a cylinder consisting of laterally associated linear protofilaments composed of alpha- and beta-tubulin heterodimers. Microtubules grow by the addition of GTP-tubulin dimers to the microtubule end, where a stabilizing cap forms. Below the cap, tubulin dimers are in GDP-bound state, owing to GTPase activity of alpha-tubulin. In Pisum sativum (Garden pea), this protein is Tubulin beta-2 chain (TUBB2).